Reading from the N-terminus, the 258-residue chain is Synaptosomal-associated protein 29 (258 aa).

Residues 1–43 (MSAYPRSYNPFDEDAEDEDARPAPWSDSRDLADGPGAPADRQQ) are disordered. Phosphoserine is present on residues Ser65, Ser77, and Ser114. Positions 76-107 (VSAEELVRQRGALERTEKMVDKMEQDLKTSQK) form a coiled coil. Disordered regions lie at residues 127-147 (PAET…GRLK) and 161-188 (QASH…SSEA). Phosphothreonine occurs at positions 130 and 137. Residues 131 to 142 (PSAQNGTLTPQP) are compositionally biased toward polar residues. 5 positions are modified to phosphoserine: Ser163, Ser182, Ser185, Ser204, and Ser210. Residues 196–258 (RACHQRIDSN…TSTERKVRQL (63 aa)) enclose the t-SNARE coiled-coil homology domain.

The protein belongs to the SNAP-25 family. Forms a SNARE complex, composed of VAMP8, SNAP29 and STX17, involved in fusion of autophagosome with lysosome. Interacts with multiple syntaxins including STX6. Interacts with EIPR1. Interacts with STX17; this interaction is increased in the absence of TMEM39A.

Its subcellular location is the cytoplasm. It is found in the golgi apparatus membrane. It localises to the cytoplasmic vesicle. The protein localises to the autophagosome membrane. The protein resides in the cell projection. Its subcellular location is the cilium membrane. Functionally, SNAREs, soluble N-ethylmaleimide-sensitive factor-attachment protein receptors, are essential proteins for fusion of cellular membranes. SNAREs localized on opposing membranes assemble to form a trans-SNARE complex, an extended, parallel four alpha-helical bundle that drives membrane fusion. SNAP29 is a SNARE involved in autophagy through the direct control of autophagosome membrane fusion with the lysososome membrane. Also plays a role in ciliogenesis by regulating membrane fusions. The protein is Synaptosomal-associated protein 29 of Bos taurus (Bovine).